The following is a 547-amino-acid chain: Chaperonin GroEL 2 (547 aa).

ATP-binding positions include 30-33 (TLGP), K51, 87-91 (DGTTT), G415, 479-481 (NAA), and D495. Residues 526-547 (KEESAAPAGGGMGGMGGMGGMM) form a disordered region. The segment covering 533 to 547 (AGGGMGGMGGMGGMM) has biased composition (gly residues).

It belongs to the chaperonin (HSP60) family. As to quaternary structure, forms a cylinder of 14 subunits composed of two heptameric rings stacked back-to-back. Interacts with the co-chaperonin GroES.

Its subcellular location is the cytoplasm. The enzyme catalyses ATP + H2O + a folded polypeptide = ADP + phosphate + an unfolded polypeptide.. Its function is as follows. Together with its co-chaperonin GroES, plays an essential role in assisting protein folding. The GroEL-GroES system forms a nano-cage that allows encapsulation of the non-native substrate proteins and provides a physical environment optimized to promote and accelerate protein folding. This Anaeromyxobacter sp. (strain Fw109-5) protein is Chaperonin GroEL 2.